The chain runs to 123 residues: Putative iron-sulfur cluster insertion protein ErpA (123 aa).

Positions 51, 115, and 117 each coordinate iron-sulfur cluster.

Belongs to the HesB/IscA family. Homodimer. It depends on iron-sulfur cluster as a cofactor.

In terms of biological role, required for insertion of 4Fe-4S clusters. The chain is Putative iron-sulfur cluster insertion protein ErpA from Burkholderia multivorans (strain ATCC 17616 / 249).